The primary structure comprises 501 residues: Ammonium transporter 1 member 1 (501 aa).

The next 10 helical transmembrane spans lie at 8 to 28, 46 to 66, 81 to 101, 128 to 148, 152 to 172, 199 to 219, 243 to 263, 333 to 353, 366 to 386, and 419 to 439; these read LAVL…GQLG, LLFS…LCAG, VLDA…FAFG, FLYQ…SIAE, FVAY…VVSH, FAGS…GALI, LVVL…PGSF, VVEP…LLGC, LEAA…TALF, and LIQI…LFFI. Thr460 carries the phosphothreonine modification. Ser475, Ser488, Ser490, and Ser492 each carry phosphoserine.

Belongs to the ammonia transporter channel (TC 1.A.11.2) family. In terms of assembly, self interacts. Interacts with the receptor protein kinases CEPR2, At2g28990 and PAM74. In terms of tissue distribution, highly expressed in roots. Expressed in root tips, root hairs, root epidermis, rhizodermis, cortex and pericycle. Expressed in leaves epidermal and mesophyll cells.

It is found in the cell membrane. Functionally, high affinity ammonium transporter probably involved in ammonium uptake from the soil, long-distance transport to the shoots and re-uptake of apoplastic ammonium that derives from photorespiration in shoots. Contributes with AMT1-3 to the overall ammonium uptake capacity in roots under nitrogen-deficiency conditions. This is Ammonium transporter 1 member 1 (AMT1-1) from Arabidopsis thaliana (Mouse-ear cress).